A 70-amino-acid chain; its full sequence is UPF0270 protein VS_2853 (70 aa).

This sequence belongs to the UPF0270 family.

In Vibrio atlanticus (strain LGP32) (Vibrio splendidus (strain Mel32)), this protein is UPF0270 protein VS_2853.